Consider the following 1014-residue polypeptide: Valine--tRNA ligase (1014 aa).

Residues 49–59 carry the 'HIGH' region motif; it reads PNVTGSLHMGH. The short motif at 542 to 546 is the 'KMSKS' region element; that stretch reads KMSKS. Lysine 545 lines the ATP pocket. Residues 947–1014 are a coiled coil; sequence VVDIETLRAK…ILRLRLQTLV (68 aa).

This sequence belongs to the class-I aminoacyl-tRNA synthetase family. ValS type 1 subfamily. In terms of assembly, monomer.

It is found in the cytoplasm. It catalyses the reaction tRNA(Val) + L-valine + ATP = L-valyl-tRNA(Val) + AMP + diphosphate. Its function is as follows. Catalyzes the attachment of valine to tRNA(Val). As ValRS can inadvertently accommodate and process structurally similar amino acids such as threonine, to avoid such errors, it has a 'posttransfer' editing activity that hydrolyzes mischarged Thr-tRNA(Val) in a tRNA-dependent manner. This chain is Valine--tRNA ligase, found in Nostoc sp. (strain PCC 7120 / SAG 25.82 / UTEX 2576).